The chain runs to 257 residues: 5'-nucleotidase SurE (257 aa).

A divalent metal cation-binding residues include aspartate 9, aspartate 10, serine 40, and asparagine 93.

The protein belongs to the SurE nucleotidase family. It depends on a divalent metal cation as a cofactor.

It is found in the cytoplasm. The enzyme catalyses a ribonucleoside 5'-phosphate + H2O = a ribonucleoside + phosphate. Nucleotidase that shows phosphatase activity on nucleoside 5'-monophosphates. The chain is 5'-nucleotidase SurE from Campylobacter hominis (strain ATCC BAA-381 / DSM 21671 / CCUG 45161 / LMG 19568 / NCTC 13146 / CH001A).